The following is a 256-amino-acid chain: Type III pantothenate kinase (256 aa).

Residue 6–13 (DVGNSHIY) participates in ATP binding. Substrate is bound by residues Y99 and 106–109 (GADR). The active-site Proton acceptor is the D108. Position 129 (D129) interacts with K(+). ATP is bound at residue T132. A substrate-binding site is contributed by T184.

This sequence belongs to the type III pantothenate kinase family. As to quaternary structure, homodimer. The cofactor is NH4(+). K(+) is required as a cofactor.

It localises to the cytoplasm. It carries out the reaction (R)-pantothenate + ATP = (R)-4'-phosphopantothenate + ADP + H(+). Its pathway is cofactor biosynthesis; coenzyme A biosynthesis; CoA from (R)-pantothenate: step 1/5. Its function is as follows. Catalyzes the phosphorylation of pantothenate (Pan), the first step in CoA biosynthesis. This chain is Type III pantothenate kinase, found in Legionella pneumophila (strain Corby).